Here is a 76-residue protein sequence, read N- to C-terminus: Small ribosomal subunit protein bS18 (76 aa).

Belongs to the bacterial ribosomal protein bS18 family. Part of the 30S ribosomal subunit. Forms a tight heterodimer with protein bS6.

In terms of biological role, binds as a heterodimer with protein bS6 to the central domain of the 16S rRNA, where it helps stabilize the platform of the 30S subunit. This is Small ribosomal subunit protein bS18 from Xylella fastidiosa (strain 9a5c).